An 853-amino-acid chain; its full sequence is DNA mismatch repair protein MutS (853 aa).

614-621 serves as a coordination point for ATP; sequence GPNMGGKS.

This sequence belongs to the DNA mismatch repair MutS family.

In terms of biological role, this protein is involved in the repair of mismatches in DNA. It is possible that it carries out the mismatch recognition step. This protein has a weak ATPase activity. This Citrobacter koseri (strain ATCC BAA-895 / CDC 4225-83 / SGSC4696) protein is DNA mismatch repair protein MutS.